The sequence spans 100 residues: Carboxysome shell vertex protein CcmL (100 aa).

The region spanning 1–83 is the BMV domain; that stretch reads MQLAKVLGTV…LDAMVVGIID (83 aa).

It belongs to the CcmL/EutN family. CcmL subfamily. In terms of assembly, homopentamer. Interacts with full-length CcmM.

Its subcellular location is the carboxysome. Its function is as follows. Probably forms vertices in the carboxysome, a polyhedral inclusion where RuBisCO (ribulose bisphosphate carboxylase, rbcL-rbcS) is sequestered. Has been modeled to induce curvature upon insertion into an otherwise flat hexagonal molecular layer of CcmK subunits. This chain is Carboxysome shell vertex protein CcmL, found in Synechocystis sp. (strain ATCC 27184 / PCC 6803 / Kazusa).